A 210-amino-acid chain; its full sequence is Ribosomal RNA small subunit methyltransferase G (210 aa).

S-adenosyl-L-methionine is bound by residues Gly-77, Phe-82, 100–102 (ERS), 128–129 (VE), and Arg-141.

It belongs to the methyltransferase superfamily. RNA methyltransferase RsmG family.

The protein resides in the cytoplasm. Functionally, specifically methylates the N7 position of a guanine in 16S rRNA. This chain is Ribosomal RNA small subunit methyltransferase G, found in Borrelia duttonii (strain Ly).